A 197-amino-acid polypeptide reads, in one-letter code: GTP cyclohydrolase-2 (197 aa).

50-54 (RIHSE) lines the GTP pocket. Zn(2+)-binding residues include Cys55, Cys66, and Cys68. GTP contacts are provided by residues Gln71, 93–95 (EGR), and Thr115. The Proton acceptor role is filled by Asp127. Residue Arg129 is the Nucleophile of the active site. GTP is bound by residues Thr150 and Lys155.

It belongs to the GTP cyclohydrolase II family. It depends on Zn(2+) as a cofactor.

It carries out the reaction GTP + 4 H2O = 2,5-diamino-6-hydroxy-4-(5-phosphoribosylamino)-pyrimidine + formate + 2 phosphate + 3 H(+). It functions in the pathway cofactor biosynthesis; riboflavin biosynthesis; 5-amino-6-(D-ribitylamino)uracil from GTP: step 1/4. Functionally, catalyzes the conversion of GTP to 2,5-diamino-6-ribosylamino-4(3H)-pyrimidinone 5'-phosphate (DARP), formate and pyrophosphate. The polypeptide is GTP cyclohydrolase-2 (Aeromonas hydrophila subsp. hydrophila (strain ATCC 7966 / DSM 30187 / BCRC 13018 / CCUG 14551 / JCM 1027 / KCTC 2358 / NCIMB 9240 / NCTC 8049)).